Here is a 1258-residue protein sequence, read N- to C-terminus: Cohesin subunit SA-1 (1258 aa).

The interval 1–59 (MITSELPVLQDSTNETTAHSDAGSELEETEVKGKRKRGRPGRPPSTNKKPRKSPGEKSR) is disordered. Residues 10 to 19 (QDSTNETTAH) show a composition bias toward polar residues. Serine 24 is subject to Phosphoserine. The SCD domain occupies 296-381 (FVHRYRDAIA…NRFKDRIVSM (86 aa)). Serine 756, serine 1062, and serine 1065 each carry phosphoserine. The interval 1055-1148 (GGEDDRMSVN…EHGSEPDFLH (94 aa)) is disordered. Low complexity predominate over residues 1062 to 1075 (SVNSGSSSSKTSSV). The segment covering 1076–1087 (RSKKGRPPLHRK) has biased composition (basic residues). Position 1093 is a phosphoserine (serine 1093). Residues 1095-1106 (DNTWLNRTDTMI) show a composition bias toward polar residues. Positions 1137 to 1146 (ESEHGSEPDF) are enriched in basic and acidic residues. A Glycyl lysine isopeptide (Lys-Gly) (interchain with G-Cter in SUMO2) cross-link involves residue lysine 1161.

It belongs to the SCC3 family. In terms of assembly, cohesin complexes are composed of a heterodimer between a SMC1 protein (SMC1A or SMC1B) and SMC3, which are attached via their hinge domain, and RAD21 which link them at their heads, and one STAG protein (STAG1, STAG2 or STAG3). In cohesin complexes, STAG1 is mutually exclusive with STAG2 and STAG3. Interacts directly with RAD21 in cohesin complex. The cohesin complex interacts with the cohesin loading complex subunits NIPBL/Scc2 (via HEAT repeats) and MAU2/Scc4. NIPBL directly contacts all members of the complex, RAD21, SMC1A/B, SMC3 and STAG1. In terms of processing, phosphorylated by PLK1. The large dissociation of cohesin from chromosome arms during prophase is partly due to its phosphorylation.

The protein resides in the nucleus. It is found in the chromosome. Its function is as follows. Component of cohesin complex, a complex required for the cohesion of sister chromatids after DNA replication. The cohesin complex apparently forms a large proteinaceous ring within which sister chromatids can be trapped. At anaphase, the complex is cleaved and dissociates from chromatin, allowing sister chromatids to segregate. The cohesin complex may also play a role in spindle pole assembly during mitosis. In Mus musculus (Mouse), this protein is Cohesin subunit SA-1 (Stag1).